Consider the following 118-residue polypeptide: D-dopachrome decarboxylase (118 aa).

N-acetylproline is present on Pro2. The residue at position 33 (Lys33) is an N6-acetyllysine. Ser90 carries the phosphoserine modification.

Belongs to the MIF family. As to quaternary structure, homotrimer.

The protein localises to the cytoplasm. It carries out the reaction D-dopachrome + H(+) = 5,6-dihydroxyindole + CO2. Functionally, tautomerization of D-dopachrome with decarboxylation to give 5,6-dihydroxyindole (DHI). This chain is D-dopachrome decarboxylase (Ddt), found in Mus musculus (Mouse).